A 426-amino-acid polypeptide reads, in one-letter code: Glutamyl-tRNA reductase (426 aa).

Residues Thr49–Arg52, Ser109, Glu114–Gln116, and Gln120 each bind substrate. The active-site Nucleophile is the Cys50. Gly189 to Gly194 serves as a coordination point for NADP(+).

This sequence belongs to the glutamyl-tRNA reductase family. In terms of assembly, homodimer.

The catalysed reaction is (S)-4-amino-5-oxopentanoate + tRNA(Glu) + NADP(+) = L-glutamyl-tRNA(Glu) + NADPH + H(+). The protein operates within porphyrin-containing compound metabolism; protoporphyrin-IX biosynthesis; 5-aminolevulinate from L-glutamyl-tRNA(Glu): step 1/2. It functions in the pathway porphyrin-containing compound metabolism; chlorophyll biosynthesis. Its function is as follows. Catalyzes the NADPH-dependent reduction of glutamyl-tRNA(Glu) to glutamate 1-semialdehyde (GSA). The protein is Glutamyl-tRNA reductase of Prosthecochloris aestuarii (strain DSM 271 / SK 413).